Reading from the N-terminus, the 417-residue chain is UPF0754 membrane protein PCC8801_0398 (417 aa).

A run of 2 helical transmembrane segments spans residues 11–31 (FSLL…GYFT) and 395–415 (IVNI…ILLI).

This sequence belongs to the UPF0754 family.

It is found in the cell inner membrane. This Rippkaea orientalis (strain PCC 8801 / RF-1) (Cyanothece sp. (strain PCC 8801)) protein is UPF0754 membrane protein PCC8801_0398.